A 304-amino-acid chain; its full sequence is Glycosyltransferase AglE (304 aa).

It belongs to the glycosyltransferase 2 family.

The protein resides in the cell membrane. The protein operates within cell surface structure biogenesis; S-layer biogenesis. Involved in the assembly of a N-linked pentasaccharide that decorates the S-layer glycoprotein and flagellins. Catalyzes the addition to the dolichol phosphate carrier of the hexuronic acid found at position 4 of the pentasaccharide. This Haloferax volcanii (strain ATCC 29605 / DSM 3757 / JCM 8879 / NBRC 14742 / NCIMB 2012 / VKM B-1768 / DS2) (Halobacterium volcanii) protein is Glycosyltransferase AglE (aglE).